A 211-amino-acid chain; its full sequence is Dephospho-CoA kinase (211 aa).

Positions valine 3–alanine 206 constitute a DPCK domain. Alanine 11 to threonine 16 provides a ligand contact to ATP.

Belongs to the CoaE family.

The protein resides in the cytoplasm. The catalysed reaction is 3'-dephospho-CoA + ATP = ADP + CoA + H(+). It participates in cofactor biosynthesis; coenzyme A biosynthesis; CoA from (R)-pantothenate: step 5/5. Catalyzes the phosphorylation of the 3'-hydroxyl group of dephosphocoenzyme A to form coenzyme A. This Anaeromyxobacter dehalogenans (strain 2CP-C) protein is Dephospho-CoA kinase.